A 351-amino-acid polypeptide reads, in one-letter code: uncharacterized protein (351 aa).

An N-terminal signal peptide occupies residues 1 to 32 (MKNKKRVFIASSLSCVLLLLSAANTEANSANK). The disordered stretch occupies residues 26–74 (EANSANKDSQDQTKKEHVDKAQQKEKRNVNDKDKNTPGPDDIGKNGKVT). Residues 33-60 (DSQDQTKKEHVDKAQQKEKRNVNDKDKN) are compositionally biased toward basic and acidic residues.

It belongs to the aerolysin family.

This is an uncharacterized protein from Staphylococcus aureus (strain MRSA252).